The primary structure comprises 238 residues: Accessory gene regulator protein A (238 aa).

The Response regulatory domain maps to 2–125 (KIFVCEDDQR…LKMRIIDCLE (124 aa)). A 4-aspartylphosphate modification is found at Asp-59. An HTH LytTR-type domain is found at 143–238 (IELKRGSNSV…FASVRNVKKI (96 aa)).

The protein resides in the cytoplasm. Required for high-level post-exponential phase expression of a series of secreted proteins. The chain is Accessory gene regulator protein A (agrA) from Staphylococcus epidermidis (strain ATCC 35984 / DSM 28319 / BCRC 17069 / CCUG 31568 / BM 3577 / RP62A).